A 93-amino-acid chain; its full sequence is YcgL domain-containing protein Shal_1837 (93 aa).

The YcgL domain occupies 1-85; that stretch reads MICAVYKSRR…PVVNLLEQHK (85 aa).

This chain is YcgL domain-containing protein Shal_1837, found in Shewanella halifaxensis (strain HAW-EB4).